A 326-amino-acid chain; its full sequence is Glycerol-3-phosphate dehydrogenase [NAD(P)+] (326 aa).

NADPH-binding residues include tryptophan 16, arginine 36, arginine 37, and lysine 106. The sn-glycerol 3-phosphate site is built by lysine 106 and glycine 132. Alanine 136 contributes to the NADPH binding site. Sn-glycerol 3-phosphate is bound by residues lysine 187, aspartate 240, serine 250, arginine 251, and asparagine 252. The active-site Proton acceptor is the lysine 187. Arginine 251 lines the NADPH pocket. 2 residues coordinate NADPH: valine 271 and glutamate 273.

The protein belongs to the NAD-dependent glycerol-3-phosphate dehydrogenase family.

Its subcellular location is the cytoplasm. The enzyme catalyses sn-glycerol 3-phosphate + NAD(+) = dihydroxyacetone phosphate + NADH + H(+). It catalyses the reaction sn-glycerol 3-phosphate + NADP(+) = dihydroxyacetone phosphate + NADPH + H(+). The protein operates within membrane lipid metabolism; glycerophospholipid metabolism. Its function is as follows. Catalyzes the reduction of the glycolytic intermediate dihydroxyacetone phosphate (DHAP) to sn-glycerol 3-phosphate (G3P), the key precursor for phospholipid synthesis. The protein is Glycerol-3-phosphate dehydrogenase [NAD(P)+] of Deinococcus geothermalis (strain DSM 11300 / CIP 105573 / AG-3a).